A 461-amino-acid polypeptide reads, in one-letter code: Glutamate-gated chloride channel alpha (461 aa).

The N-terminal stretch at 1–20 is a signal peptide; the sequence is MATWIVGKLIIASLILGIQA. At 21–275 the chain is on the extracellular side; that stretch reads QQARTKSQDI…TTIQLKREFS (255 aa). L-glutamate-binding residues include arginine 98, arginine 117, and serine 182. Cysteine 191 and cysteine 205 form a disulfide bridge. Serine 211 is an L-glutamate binding site. N-linked (GlcNAc...) asparagine glycosylation is present at asparagine 246. Residues cysteine 252 and cysteine 263 are joined by a disulfide bond. A helical transmembrane segment spans residues 276-298; that stretch reads FYLLQLYIPSCMLVIVSWVSFWF. Residues 299–303 are Cytoplasmic-facing; sequence DRTAI. The chain crosses the membrane as a helical span at residues 304-325; sequence PARVTLGVTTLLTMTAQSAGIN. Topologically, residues 326 to 332 are extracellular; the sequence is SQLPPVS. The helical transmembrane segment at 333–353 threads the bilayer; the sequence is YIKAIDVWIGACMTFIFCALL. At 354–432 the chain is on the cytoplasmic side; the sequence is EFALVNHIAN…EWNDISKRVD (79 aa). Residues 433–454 traverse the membrane as a helical segment; it reads LISRALFPVLFFVFNILYWSRF. Residues 455–461 are Extracellular-facing; that stretch reads GQQNVLF.

The protein belongs to the ligand-gated ion channel (TC 1.A.9) family. Glutamate-gated chloride channel (TC 1.A.9.4) subfamily. In terms of assembly, pentamer. Homooligomer, forms functional heterooligomers with glc-2.

The protein localises to the postsynaptic cell membrane. It localises to the cell membrane. Its function is as follows. Glutamate-gated chloride channel subunit; channel properties depend on the subunit composition. Glutamate binding triggers a rapidly reversible current in heteromeric channels formed by glc-1 and glc-2, while the anti-helmintic drug ivermectin and other avermectins trigger a permanently open channel configuration. Channels containing only glc-1 are activated by ivermectin, but not by glutamate alone (in vitro). The heteromeric channel formed by glc-1 and glc-2 is also activated by ibotenate, and it is blocked by picrotoxin and flufenamic acid. Plays a role in the regulation of locomotor behavior. This is Glutamate-gated chloride channel alpha from Caenorhabditis elegans.